Consider the following 435-residue polypeptide: Zinc finger CCCH domain-containing protein 16 (435 aa).

The segment at 1-27 adopts a C3H1-type zinc-finger fold; it reads MRKELCRNFQRGSCRYGENCRFLHPQQ. Residues 2–88 are 6 X 2 AA repeats of F-G; the sequence is RKELCRNFQR…ASTPTGGGAA (87 aa). Disordered regions lie at residues 25–105 and 205–374; these read PQQA…DHKC and TPSI…SQNN. Repeat copies occupy residues 34–35 and 36–37. Residues 39 to 51 are compositionally biased toward low complexity; sequence QNQQQQQQQQQQN. Repeat copies occupy residues 56–57 and 58–59. Over residues 63-77 the composition is skewed to polar residues; sequence GGSSRPNQFQNTWSR. Residues 78–99 are compositionally biased toward low complexity; sequence TASTPTGGGAAASTQQTGKQTQ. Polar residues-rich tracts occupy residues 205–320 and 328–339; these read TPSI…VNTP and SGFQTNPSTTFK. 2 consecutive repeat copies span residues 343–344 and 359–360. The span at 351–374 shows a compositional bias: polar residues; sequence TTPQNNNIFGQSTPTPATNTSQNN.

In terms of assembly, part of the nuclear pore complex (NPC). The NPC has an eight-fold symmetrical structure comprising a central transport channel and two rings, the cytoplasmic and nuclear rings, to which eight filaments are attached. The cytoplasmic filaments have loose ends, while the nuclear filaments are joined in a distal ring, forming a nuclear basket. NPCs are highly dynamic in configuration and composition, and can be devided in 3 subcomplexes, the NUP62 subcomplex, the NUP107-160 subcomplex and the NUP93 subcomplex, containing approximately 30 different nucleoporin proteins.

It localises to the nucleus envelope. Its subcellular location is the nucleus. The protein localises to the nuclear pore complex. This chain is Zinc finger CCCH domain-containing protein 16, found in Arabidopsis thaliana (Mouse-ear cress).